A 200-amino-acid chain; its full sequence is uncharacterized protein (200 aa).

The segment at 1–21 (MSNSAQRDARNSRDESARASD) is disordered. The segment covering 7–21 (RDARNSRDESARASD) has biased composition (basic and acidic residues).

This is an uncharacterized protein from Mycobacterium tuberculosis (strain CDC 1551 / Oshkosh).